Here is a 512-residue protein sequence, read N- to C-terminus: Histidine ammonia-lyase (512 aa).

Residues 141-143 (ASG) constitute a cross-link (5-imidazolinone (Ala-Gly)). Position 142 is a 2,3-didehydroalanine (Ser) (S142).

This sequence belongs to the PAL/histidase family. Contains an active site 4-methylidene-imidazol-5-one (MIO), which is formed autocatalytically by cyclization and dehydration of residues Ala-Ser-Gly.

Its subcellular location is the cytoplasm. It carries out the reaction L-histidine = trans-urocanate + NH4(+). Its pathway is amino-acid degradation; L-histidine degradation into L-glutamate; N-formimidoyl-L-glutamate from L-histidine: step 1/3. This is Histidine ammonia-lyase from Bacillus velezensis (strain DSM 23117 / BGSC 10A6 / LMG 26770 / FZB42) (Bacillus amyloliquefaciens subsp. plantarum).